The chain runs to 416 residues: Gamma-glutamyl phosphate reductase (416 aa).

It belongs to the gamma-glutamyl phosphate reductase family.

The protein resides in the cytoplasm. The catalysed reaction is L-glutamate 5-semialdehyde + phosphate + NADP(+) = L-glutamyl 5-phosphate + NADPH + H(+). Its pathway is amino-acid biosynthesis; L-proline biosynthesis; L-glutamate 5-semialdehyde from L-glutamate: step 2/2. Its function is as follows. Catalyzes the NADPH-dependent reduction of L-glutamate 5-phosphate into L-glutamate 5-semialdehyde and phosphate. The product spontaneously undergoes cyclization to form 1-pyrroline-5-carboxylate. The polypeptide is Gamma-glutamyl phosphate reductase (Streptococcus mutans serotype c (strain ATCC 700610 / UA159)).